Consider the following 685-residue polypeptide: Methionine--tRNA ligase (685 aa).

The 'HIGH' region signature appears at 12-22; sequence PYANGSIHLGH. Zn(2+) contacts are provided by Cys143, Cys146, Cys156, and Cys159. Residues 339 to 343 carry the 'KMSKS' region motif; the sequence is KMSKS. Lys342 lines the ATP pocket. Positions 582–685 constitute a tRNA-binding domain; the sequence is DFMKIDMRVA…AGAQPGDKVG (104 aa).

It belongs to the class-I aminoacyl-tRNA synthetase family. MetG type 1 subfamily. Homodimer. Requires Zn(2+) as cofactor.

The protein resides in the cytoplasm. The enzyme catalyses tRNA(Met) + L-methionine + ATP = L-methionyl-tRNA(Met) + AMP + diphosphate. In terms of biological role, is required not only for elongation of protein synthesis but also for the initiation of all mRNA translation through initiator tRNA(fMet) aminoacylation. The chain is Methionine--tRNA ligase from Neisseria meningitidis serogroup C (strain 053442).